A 239-amino-acid chain; its full sequence is Increased recombination centers protein 22-2 (239 aa).

The first 19 residues, 1–19 (MKLSTIFTAFAATIATVAG), serve as a signal peptide directing secretion. Over 20-161 (YETTGSKQTV…AAVSFFDPRL (142 aa)) the chain is Lumenal. A helical transmembrane segment spans residues 162 to 182 (IFLELVLLITFAGLIYVGYEI). Topologically, residues 183–239 (WGKQYFKGVAPVKAKKVSAAKASSPVATGPSTTSATGYDTNWIPESHLKQKKTKKVN) are cytoplasmic. Residues 202 to 222 (AKASSPVATGPSTTSATGYDT) are disordered. Positions 211-221 (GPSTTSATGYD) are enriched in polar residues.

Belongs to the IRC22 family.

The protein localises to the endoplasmic reticulum membrane. Functionally, is probably involved in a pathway contributing to genomic integrity. The protein is Increased recombination centers protein 22-2 (IRC22-2) of Candida albicans (strain SC5314 / ATCC MYA-2876) (Yeast).